Consider the following 201-residue polypeptide: Small ribosomal subunit protein uS4c (201 aa).

The S4 RNA-binding domain maps to 89–151 (MRLDNILFRL…QKSKTLIQNY (63 aa)).

The protein belongs to the universal ribosomal protein uS4 family. As to quaternary structure, part of the 30S ribosomal subunit. Contacts protein S5. The interaction surface between S4 and S5 is involved in control of translational fidelity.

The protein resides in the plastid. Its subcellular location is the chloroplast. Its function is as follows. One of the primary rRNA binding proteins, it binds directly to 16S rRNA where it nucleates assembly of the body of the 30S subunit. With S5 and S12 plays an important role in translational accuracy. This is Small ribosomal subunit protein uS4c (rps4) from Phaseolus vulgaris (Kidney bean).